We begin with the raw amino-acid sequence, 357 residues long: Anthranilate phosphoribosyltransferase (357 aa).

Residues Gly-94, Gly-97–Asp-98, Thr-102, Asn-104–Thr-107, Lys-122–Ser-130, and Gly-134 contribute to the 5-phospho-alpha-D-ribose 1-diphosphate site. Residue Gly-94 participates in anthranilate binding. A Mg(2+)-binding site is contributed by Ser-106. Residue Asn-125 coordinates anthranilate. Residue Arg-180 participates in anthranilate binding. 2 residues coordinate Mg(2+): Asp-238 and Glu-239.

This sequence belongs to the anthranilate phosphoribosyltransferase family. Homodimer. It depends on Mg(2+) as a cofactor.

It carries out the reaction N-(5-phospho-beta-D-ribosyl)anthranilate + diphosphate = 5-phospho-alpha-D-ribose 1-diphosphate + anthranilate. It participates in amino-acid biosynthesis; L-tryptophan biosynthesis; L-tryptophan from chorismate: step 2/5. Catalyzes the transfer of the phosphoribosyl group of 5-phosphorylribose-1-pyrophosphate (PRPP) to anthranilate to yield N-(5'-phosphoribosyl)-anthranilate (PRA). The polypeptide is Anthranilate phosphoribosyltransferase (Mycobacterium sp. (strain JLS)).